The primary structure comprises 403 residues: Phosphoglycerate kinase (403 aa).

Substrate contacts are provided by residues Asp-21–Asn-23, Arg-36, His-59–Arg-62, Arg-119, and Arg-159. ATP is bound by residues Lys-214, Gly-301, Glu-332, and Gly-359–Ser-362.

This sequence belongs to the phosphoglycerate kinase family. As to quaternary structure, monomer.

It localises to the cytoplasm. It catalyses the reaction (2R)-3-phosphoglycerate + ATP = (2R)-3-phospho-glyceroyl phosphate + ADP. It functions in the pathway carbohydrate degradation; glycolysis; pyruvate from D-glyceraldehyde 3-phosphate: step 2/5. This chain is Phosphoglycerate kinase, found in Lactobacillus helveticus (strain DPC 4571).